We begin with the raw amino-acid sequence, 347 residues long: Nicotinate-nucleotide--dimethylbenzimidazole phosphoribosyltransferase (347 aa).

Catalysis depends on Glu-316, which acts as the Proton acceptor.

This sequence belongs to the CobT family.

It carries out the reaction 5,6-dimethylbenzimidazole + nicotinate beta-D-ribonucleotide = alpha-ribazole 5'-phosphate + nicotinate + H(+). The protein operates within nucleoside biosynthesis; alpha-ribazole biosynthesis; alpha-ribazole from 5,6-dimethylbenzimidazole: step 1/2. Its function is as follows. Catalyzes the synthesis of alpha-ribazole-5'-phosphate from nicotinate mononucleotide (NAMN) and 5,6-dimethylbenzimidazole (DMB). This chain is Nicotinate-nucleotide--dimethylbenzimidazole phosphoribosyltransferase, found in Vibrio campbellii (strain ATCC BAA-1116).